Here is a 159-residue protein sequence, read N- to C-terminus: Transcriptional repressor NrdR (159 aa).

A zinc finger lies at 3-34; the sequence is CPFCRHEDTQVVDSRVSEDGAAIRRRRRCSAC. The region spanning 49-139 is the ATP-cone domain; the sequence is PAVVKKDGSR…VYRRFEDVSE (91 aa).

This sequence belongs to the NrdR family. Zn(2+) is required as a cofactor.

Its function is as follows. Negatively regulates transcription of bacterial ribonucleotide reductase nrd genes and operons by binding to NrdR-boxes. This chain is Transcriptional repressor NrdR, found in Burkholderia multivorans (strain ATCC 17616 / 249).